A 751-amino-acid chain; its full sequence is Catalase-peroxidase 1 (751 aa).

A compositionally biased stretch (basic and acidic residues) spans 1–11 (MTDKQHTRSVS). Residues 1 to 31 (MTDKQHTRSVSESENPAIPSPTPKVSRPRRN) are disordered. A cross-link (tryptophyl-tyrosyl-methioninium (Trp-Tyr) (with M-251)) is located at residues 103-225 (WHAAGTYRIA…LANVQMGLIY (123 aa)). H104 acts as the Proton acceptor in catalysis. The segment at residues 225–251 (YVNPEGPGGNPDPLAAARDIRETFARM) is a cross-link (tryptophyl-tyrosyl-methioninium (Tyr-Met) (with W-103)). H266 is a binding site for heme b. The segment at 345–375 (AGAKQWKPKNPEANDTVPDAHGASRRHSPTM) is disordered.

This sequence belongs to the peroxidase family. Peroxidase/catalase subfamily. As to quaternary structure, homodimer or homotetramer. Heme b serves as cofactor. In terms of processing, formation of the three residue Trp-Tyr-Met cross-link is important for the catalase, but not the peroxidase activity of the enzyme.

The enzyme catalyses H2O2 + AH2 = A + 2 H2O. It catalyses the reaction 2 H2O2 = O2 + 2 H2O. Functionally, bifunctional enzyme with both catalase and broad-spectrum peroxidase activity. This Cupriavidus pinatubonensis (strain JMP 134 / LMG 1197) (Cupriavidus necator (strain JMP 134)) protein is Catalase-peroxidase 1.